Here is a 344-residue protein sequence, read N- to C-terminus: S-adenosylmethionine:tRNA ribosyltransferase-isomerase (344 aa).

It belongs to the QueA family. As to quaternary structure, monomer.

The protein localises to the cytoplasm. The enzyme catalyses 7-aminomethyl-7-carbaguanosine(34) in tRNA + S-adenosyl-L-methionine = epoxyqueuosine(34) in tRNA + adenine + L-methionine + 2 H(+). It participates in tRNA modification; tRNA-queuosine biosynthesis. Transfers and isomerizes the ribose moiety from AdoMet to the 7-aminomethyl group of 7-deazaguanine (preQ1-tRNA) to give epoxyqueuosine (oQ-tRNA). The protein is S-adenosylmethionine:tRNA ribosyltransferase-isomerase of Pediococcus pentosaceus (strain ATCC 25745 / CCUG 21536 / LMG 10740 / 183-1w).